A 419-amino-acid chain; its full sequence is Phosphoglycerate kinase (419 aa).

(2R)-3-phosphoglycerate contacts are provided by Val24, Asp25, Phe26, Asn27, Arg40, Ser63, His64, Gly66, Arg67, Leu122, Arg123, His169, and Arg170. Residue Gly213 coordinates ADP. Gly213 serves as a coordination point for CDP. AMP is bound by residues Ala214 and Lys215. Residue Ala214 participates in ATP binding. A Mg(2+)-binding site is contributed by Ala214. Positions 217 and 218 each coordinate Mg(2+). Asp218 serves as a coordination point for CDP. AMP is bound at residue Lys219. Lys219 is an ATP binding site. Gly237 provides a ligand contact to ADP. Gly237 is a binding site for CDP. Residues Gly238 and Gly313 each contribute to the AMP site. ATP-binding residues include Gly238 and Gly313. Residues Gly338 and Phe343 each coordinate CDP. An ADP-binding site is contributed by Phe343. Glu344 is an AMP binding site. Glu344, Asp375, and Thr376 together coordinate ATP. Asp375 is a binding site for Mg(2+).

It belongs to the phosphoglycerate kinase family. In terms of assembly, monomer. Requires Mg(2+) as cofactor.

The enzyme catalyses (2R)-3-phosphoglycerate + ATP = (2R)-3-phospho-glyceroyl phosphate + ADP. It functions in the pathway carbohydrate degradation; glycolysis; pyruvate from D-glyceraldehyde 3-phosphate: step 2/5. This is Phosphoglycerate kinase (PGK) from Sterkiella nova (Ciliate).